A 295-amino-acid polypeptide reads, in one-letter code: NAD kinase (295 aa).

Asp74 functions as the Proton acceptor in the catalytic mechanism. NAD(+) is bound by residues 74–75, 148–149, His159, Arg176, Asp178, and 189–194; these read DG, ND, and TAYALS.

The protein belongs to the NAD kinase family. The cofactor is a divalent metal cation.

It localises to the cytoplasm. The catalysed reaction is NAD(+) + ATP = ADP + NADP(+) + H(+). In terms of biological role, involved in the regulation of the intracellular balance of NAD and NADP, and is a key enzyme in the biosynthesis of NADP. Catalyzes specifically the phosphorylation on 2'-hydroxyl of the adenosine moiety of NAD to yield NADP. In Legionella pneumophila (strain Paris), this protein is NAD kinase.